We begin with the raw amino-acid sequence, 297 residues long: Phospholipid scramblase 2 (297 aa).

Positions Met1–Pro72 are proline-rich domain (PRD). Topologically, residues Met1–Lys276 are cytoplasmic. Thr149 carries the phosphothreonine; by PKC modification. S-palmitoyl cysteine attachment occurs at residues Cys172, Cys173, Cys174, Cys176, and Cys177. Residues Met277 to Phe293 traverse the membrane as a helical segment. Topologically, residues Glu294 to Arg297 are extracellular.

It belongs to the phospholipid scramblase family. Requires Ca(2+) as cofactor. Expression of isoform 1 seems restricted to testis.

It is found in the membrane. It localises to the nucleus. It carries out the reaction a 1,2-diacyl-sn-glycero-3-phosphocholine(in) = a 1,2-diacyl-sn-glycero-3-phosphocholine(out). Functionally, may catalyze calcium-induced ATP-independent rapid bidirectional and non-specific movement of phospholipids (lipid scrambling or lipid flip-flop) between the inner and outer leaflet of the plasma membrane. Its function is as follows. Has no phospholipid scramblase activity, due to the lack of a N-terminal proline-rich domain. The polypeptide is Phospholipid scramblase 2 (Homo sapiens (Human)).